Consider the following 397-residue polypeptide: Succinyl-diaminopimelate desuccinylase (397 aa).

His-73 provides a ligand contact to Zn(2+). Asp-75 is a catalytic residue. Asp-106 lines the Zn(2+) pocket. Residue Glu-140 is the Proton acceptor of the active site. Residues Glu-141, Glu-169, and His-366 each coordinate Zn(2+).

Belongs to the peptidase M20A family. DapE subfamily. In terms of assembly, homodimer. Zn(2+) is required as a cofactor. It depends on Co(2+) as a cofactor.

The catalysed reaction is N-succinyl-(2S,6S)-2,6-diaminopimelate + H2O = (2S,6S)-2,6-diaminopimelate + succinate. Its pathway is amino-acid biosynthesis; L-lysine biosynthesis via DAP pathway; LL-2,6-diaminopimelate from (S)-tetrahydrodipicolinate (succinylase route): step 3/3. Functionally, catalyzes the hydrolysis of N-succinyl-L,L-diaminopimelic acid (SDAP), forming succinate and LL-2,6-diaminopimelate (DAP), an intermediate involved in the bacterial biosynthesis of lysine and meso-diaminopimelic acid, an essential component of bacterial cell walls. The polypeptide is Succinyl-diaminopimelate desuccinylase (Rhizobium meliloti (strain 1021) (Ensifer meliloti)).